The chain runs to 676 residues: Head-specific guanylate cyclase (676 aa).

Positions 466-593 (TILFSDIVGF…HSVTIANKFE (128 aa)) constitute a Guanylate cyclase domain.

This sequence belongs to the adenylyl cyclase class-4/guanylyl cyclase family. In terms of assembly, heterodimer. In terms of tissue distribution, head, where it is preferentially expressed in the CNS and the retina. Not found in bodies.

The protein resides in the cytoplasm. It catalyses the reaction GTP = 3',5'-cyclic GMP + diphosphate. May have a role in phototransduction. Catalyzes the conversion of GTP to cGMP, a common second messenger that is utilized in a wide variety of cells and signal transduction pathways. A second subunit is required for enzyme activity. This is Head-specific guanylate cyclase (Gycalpha99B) from Drosophila melanogaster (Fruit fly).